Reading from the N-terminus, the 60-residue chain is Conotoxin VnMRCL-012 (60 aa).

A signal peptide spans 1–22 (MRCLPVFVILLLLIASAPGVDA). The propeptide occupies 23–50 (QPKTKYDVPLASRHDFAKKTPKRLSKPR).

The protein belongs to the conotoxin T superfamily. Post-translationally, contains 2 disulfide bonds that can be either 'C1-C3, C2-C4' or 'C1-C4, C2-C3', since these disulfide connectivities have been observed for conotoxins with cysteine framework V (for examples, see AC P0DQQ7 and AC P81755). In terms of tissue distribution, expressed by the venom duct.

It is found in the secreted. This chain is Conotoxin VnMRCL-012, found in Conus ventricosus (Mediterranean cone).